A 185-amino-acid chain; its full sequence is Ribosome-recycling factor (185 aa).

The protein belongs to the RRF family.

Its subcellular location is the cytoplasm. Functionally, responsible for the release of ribosomes from messenger RNA at the termination of protein biosynthesis. May increase the efficiency of translation by recycling ribosomes from one round of translation to another. The polypeptide is Ribosome-recycling factor (Chromohalobacter salexigens (strain ATCC BAA-138 / DSM 3043 / CIP 106854 / NCIMB 13768 / 1H11)).